Here is a 238-residue protein sequence, read N- to C-terminus: 2-C-methyl-D-erythritol 4-phosphate cytidylyltransferase (238 aa).

Belongs to the IspD/TarI cytidylyltransferase family. IspD subfamily.

The catalysed reaction is 2-C-methyl-D-erythritol 4-phosphate + CTP + H(+) = 4-CDP-2-C-methyl-D-erythritol + diphosphate. The protein operates within isoprenoid biosynthesis; isopentenyl diphosphate biosynthesis via DXP pathway; isopentenyl diphosphate from 1-deoxy-D-xylulose 5-phosphate: step 2/6. Catalyzes the formation of 4-diphosphocytidyl-2-C-methyl-D-erythritol from CTP and 2-C-methyl-D-erythritol 4-phosphate (MEP). The protein is 2-C-methyl-D-erythritol 4-phosphate cytidylyltransferase of Acinetobacter baumannii (strain ACICU).